The chain runs to 336 residues: Ketoreductase adrE (336 aa).

Tyrosine 171 contributes to the NADP(+) binding site.

This sequence belongs to the NAD(P)-dependent epimerase/dehydratase family. Dihydroflavonol-4-reductase subfamily.

It functions in the pathway secondary metabolite biosynthesis; terpenoid biosynthesis. Functionally, ketoreductase; part of the gene cluster that mediates the biosynthesis of andrastins, meroterpenoid compounds that exhibit inhibitory activity against ras farnesyltransferase, suggesting that they could be promising leads for antitumor agents. The first step of the pathway is the synthesis of 3,5-dimethylorsellinic acid (DMOA) by the polyketide synthase adrD via condensation of one acetyl-CoA starter unit with 3 malonyl-CoA units and 2 methylations. DMAO is then converted to farnesyl-DMAO by the prenyltransferase adrG. The methyltransferase adrK catalyzes the methylation of the carboxyl group of farnesyl-DMAO to farnesyl-DMAO methyl ester which is further converted to epoxyfarnesyl-DMAO methyl ester by the FAD-dependent monooxygenase adrH. The terpene cyclase adrI then catalyzes the carbon skeletal rearrangement to generate the andrastin E, the first compound in the pathway having the andrastin scaffold, with the tetracyclic ring system. The post-cyclization tailoring enzymes adrF, adrE, adrJ, and adrA, are involved in the conversion of andrastin E into andrastin A. The short chain dehydrogenase adrF is responsible for the oxidation of the C-3 a hydroxyl group of andrastin E to yield the corresponding ketone, andrastin D. The ketoreductase adrE stereoselectively reduces the carbonyl moiety to reverse the stereochemistry of the C-3 position to yield andrastin F. The acetyltransferase adrJ is the acetyltransferase that attaches the acetyl group to the C-3 hydroxyl group of andrastin F to yield andrastin C. Finally, the cytochrome P450 monooxygenase adrA catalyzes two sequential oxidation reactions of the C-23 methyl group, to generate the corresponding alcohol andrastin B, and aldehyde andrastin A. This chain is Ketoreductase adrE, found in Penicillium roqueforti.